The chain runs to 220 residues: Iron-sulfur cluster repair protein YtfE (220 aa).

The protein belongs to the RIC family. YtfE subfamily. As to quaternary structure, homodimer.

The protein localises to the cytoplasm. Its function is as follows. Di-iron-containing protein involved in the repair of iron-sulfur clusters damaged by oxidative and nitrosative stress conditions. In Escherichia coli (strain SMS-3-5 / SECEC), this protein is Iron-sulfur cluster repair protein YtfE.